Reading from the N-terminus, the 374-residue chain is LIM domain-binding protein 1-A (374 aa).

Disordered regions lie at residues 1-24 (MLDR…IGRH), 249-297 (PPAE…ALSS), and 322-374 (TRLE…QSSQ). A compositionally biased stretch (low complexity) spans 267-297 (SGGSTMSSGGGNNNNSNSKKKSPASSFALSS). In terms of domain architecture, LIM interaction domain (LID) spans 299–338 (DVMVVGEPTLMGGEFGDEDERLITRLENTQFDAANGIDDE). The span at 341-374 (FNSSPTMGTNSPWNSKAPSSQQGKNDNPSSQSSQ) shows a compositional bias: polar residues.

It belongs to the LDB family. Expressed ubiquitously in the embryo and adult.

It is found in the nucleus. In terms of biological role, binds to the LIM domain of a wide variety of LIM domain-containing transcription factors. This Danio rerio (Zebrafish) protein is LIM domain-binding protein 1-A (ldb1a).